Consider the following 439-residue polypeptide: Xylose isomerase (439 aa).

Active-site residues include His103 and Asp106. The Mg(2+) site is built by Glu234, Glu270, His273, Asp298, Asp309, Asp311, and Asp341.

The protein belongs to the xylose isomerase family. Homotetramer. It depends on Mg(2+) as a cofactor.

It localises to the cytoplasm. The enzyme catalyses alpha-D-xylose = alpha-D-xylulofuranose. The sequence is that of Xylose isomerase from Bacteroides fragilis (strain YCH46).